A 600-amino-acid chain; its full sequence is Pyranose dehydrogenase 3 (600 aa).

An N-terminal signal peptide occupies residues 1 to 25; that stretch reads MLPRVARLNTHLVSLALLGFQITYG. 2 N-linked (GlcNAc...) asparagine glycosylation sites follow: Asn-99 and Asn-114. Tele-8alpha-FAD histidine is present on His-127. Asn-173, Asn-199, Asn-275, Asn-342, Asn-399, and Asn-507 each carry an N-linked (GlcNAc...) asparagine glycan. The active-site Proton acceptor is His-535. The N-linked (GlcNAc...) asparagine glycan is linked to Asn-546. Residue His-579 is part of the active site.

It belongs to the GMC oxidoreductase family. Monomer. Requires FAD as cofactor. N-glycosylated.

It is found in the secreted. It carries out the reaction pyranose + acceptor = pyranos-2-ulose + reduced acceptor.. The catalysed reaction is pyranose + acceptor = pyranos-3-ulose + reduced acceptor.. It catalyses the reaction pyranose + acceptor = pyranos-2,3-diulose + reduced acceptor.. The enzyme catalyses a pyranoside + acceptor = a pyranosid-3-ulose + reduced acceptor.. It carries out the reaction a pyranoside + acceptor = a pyranosid-3,4-diulose + reduced acceptor.. Catalyzes the single-oxidation or sequential double oxidation reaction of carbohydrates primarily at carbon-2 and/or carbon-3 with the concomitant reduction of the flavin. The enzyme exhibits a broad sugar substrate specificity, oxidizing different aldopyranoses to the corresponding C-1, C-2, C-3 or C-1,2, C-2,3 and C-3,4 (di)dehydro sugars with substrate-specific regioselectivity. Accepts only a narrow range of electron acceptors such as substituted benzoquinones and complexed metal ions and reacts extremely slowly with O(2) as acceptor. May play a role in the natural recycling of plant matter by oxidizing all major monosaccharides in lignocellulose and by reducing quinone compounds or reactive radical species generated during lignin depolymerization. This Leucoagaricus meleagris (Western flat-topped agaric) protein is Pyranose dehydrogenase 3.